Consider the following 498-residue polypeptide: Glycerol kinase (498 aa).

Thr-12 serves as a coordination point for ADP. Thr-12, Thr-13, and Ser-14 together coordinate ATP. A sn-glycerol 3-phosphate-binding site is contributed by Thr-12. An ADP-binding site is contributed by Arg-16. The sn-glycerol 3-phosphate site is built by Arg-82, Glu-83, and Tyr-134. Residues Arg-82, Glu-83, and Tyr-134 each contribute to the glycerol site. His-230 bears the Phosphohistidine; by HPr mark. Asp-244 contacts sn-glycerol 3-phosphate. Residues Asp-244 and Gln-245 each coordinate glycerol. Residues Thr-266 and Gly-309 each contribute to the ADP site. Residues Thr-266, Gly-309, Gln-313, and Gly-410 each contribute to the ATP site. Residues Gly-410 and Asn-414 each coordinate ADP.

It belongs to the FGGY kinase family. As to quaternary structure, homotetramer and homodimer (in equilibrium). Post-translationally, the phosphoenolpyruvate-dependent sugar phosphotransferase system (PTS), including enzyme I, and histidine-containing protein (HPr) are required for the phosphorylation, which leads to the activation of the enzyme.

It catalyses the reaction glycerol + ATP = sn-glycerol 3-phosphate + ADP + H(+). The protein operates within polyol metabolism; glycerol degradation via glycerol kinase pathway; sn-glycerol 3-phosphate from glycerol: step 1/1. Activated by phosphorylation and inhibited by fructose 1,6-bisphosphate (FBP). Functionally, key enzyme in the regulation of glycerol uptake and metabolism. Catalyzes the phosphorylation of glycerol to yield sn-glycerol 3-phosphate. The chain is Glycerol kinase from Staphylococcus aureus (strain MW2).